The chain runs to 302 residues: NADH-cytochrome b5 reductase 2 (302 aa).

Positions 1 to 41 (MFSRLSRSHSKALPIALGTVAIAAATAFYFANRNQHSFVFN) are cleaved as a propeptide — removed in mature form. Residues 12 to 32 (ALPIALGTVAIAAATAFYFAN) traverse the membrane as a helical segment. The FAD-binding FR-type domain maps to 51-155 (DKWIDLPISK…KGPIMKWKWQ (105 aa)). 158-193 (QFKSITLLGAGTGINPLYQLAHHIVENPNDKTKVNL) lines the FAD pocket. Phosphoserine is present on S278.

Belongs to the flavoprotein pyridine nucleotide cytochrome reductase family. It depends on FAD as a cofactor. Post-translationally, there are two isoforms of NADH-cytochrome b5 reductase, a 34 kDa form (p34) and a 32 kDa form (p32). The p34 form becomes firmly anchored to the outer mitochondrial membrane after an incomplete translocation arrest. The p32 form is formed after translocation of the p34 precursor to the inner mitochondrial membrane, where it is processed by mitochondrial inner membrane peptidase (IMP) complex and released to the intermembrane space.

The protein localises to the mitochondrion intermembrane space. The protein resides in the mitochondrion outer membrane. The enzyme catalyses 2 Fe(III)-[cytochrome b5] + NADH = 2 Fe(II)-[cytochrome b5] + NAD(+) + H(+). The outer membrane form may mediate the reduction of outer membrane cytochrome b5, and the soluble inter-membrane space form may transfer electrons from external NADH to cytochrome c, thereby mediating an antimycin-insensitive, energy-coupled oxidation of external NADH by yeast mitochondria. Involved in the reduction of D-erythroascorbyl free radicals. This Saccharomyces cerevisiae (strain YJM789) (Baker's yeast) protein is NADH-cytochrome b5 reductase 2 (MCR1).